The sequence spans 244 residues: Large ribosomal subunit protein uL30 (244 aa).

A disordered region spans residues Met-1–Ala-37.

It belongs to the universal ribosomal protein uL30 family.

Functionally, binds to G-rich structures in 28S rRNA and in mRNAs. Plays a regulatory role in the translation apparatus; inhibits cell-free translation of mRNAs. The sequence is that of Large ribosomal subunit protein uL30 (rpl-7) from Caenorhabditis elegans.